Consider the following 681-residue polypeptide: Sodium-dependent phosphate transporter 1 (681 aa).

6 helical membrane passes run 25–45, 66–86, 106–126, 162–182, 207–227, and 234–254; these read YLWM…SVGA, ACIL…AKVS, LMAG…VASF, IVMS…ILFF, ACTV…LLGF, and GTIL…WFFV. Residues Ser-269 and Ser-273 each carry the phosphoserine modification. The tract at residues 269–296 is disordered; the sequence is SPSESPLMEKKNSLKEDHEETKLSVSDI. The segment covering 275–290 has biased composition (basic and acidic residues); the sequence is LMEKKNSLKEDHEETK. 4 consecutive transmembrane segments (helical) span residues 515–535, 562–582, 604–624, and 654–674; these read VSLL…FAHG, VATP…GLWV, FSIE…GLPI, and IFMA…AIMA. The interval 554 to 562 is a; that stretch reads DTGDVSSKV.

It belongs to the inorganic phosphate transporter (PiT) (TC 2.A.20) family.

It is found in the cell membrane. It catalyses the reaction 2 Na(+)(out) + phosphate(out) = 2 Na(+)(in) + phosphate(in). Its function is as follows. Sodium-phosphate symporter which preferentially transports the monovalent form of phosphate with a stoichiometry of two sodium ions per phosphate ion. May play a role in extracellular matrix and cartilage calcification as well as in vascular calcification. Essential for cell proliferation but this function is independent of its phosphate transporter activity. In Felis catus (Cat), this protein is Sodium-dependent phosphate transporter 1 (Slc20a1).